Consider the following 347-residue polypeptide: Oocyte-specific homeobox protein 6 (347 aa).

Disordered regions lie at residues 1–20 and 54–86; these read MLQY…HSKF and PRSP…IQMQ. Positions 72–85 are enriched in polar residues; it reads QESQGPSGKSSIQM. The segment at residues 145–204 is a DNA-binding region (homeobox); the sequence is HRKIRTVYTEEQKCVLKKHFHKCTYPSREQRMALAVLVGVTANEIQIWFKNHRAKSKRES.

It belongs to the paired homeobox family. Obox subfamily. Specifically expressed in early embryos.

It localises to the nucleus. Functionally, transcription factor required for zygotic genome activation (ZGA), a critical event in early embryonic development during which the developmental control passes from maternally provided mRNAs to the expression of the zygotic genome after fertilization. In Mus musculus (Mouse), this protein is Oocyte-specific homeobox protein 6.